Consider the following 530-residue polypeptide: Putative ABC transporter ATP-binding protein SSO2030 (530 aa).

ABC transporter domains are found at residues 6–243 and 282–516; these read IRDL…LGLE and ALYA…EPPL. Residues 38–45 and 314–321 each bind ATP; these read GRSGSGKS and GKNGSGKT.

This sequence belongs to the ABC transporter superfamily.

Its subcellular location is the cell membrane. In terms of biological role, probably part of an ABC transporter complex. Responsible for energy coupling to the transport system. The sequence is that of Putative ABC transporter ATP-binding protein SSO2030 from Saccharolobus solfataricus (strain ATCC 35092 / DSM 1617 / JCM 11322 / P2) (Sulfolobus solfataricus).